The following is a 227-amino-acid chain: MMTSFFDQFASPYLLGIPLILVAMLLPWLLFPAPTSRWINNRLITVQTWLTGRFTNQLMTPLNFSGHKWALLFASLMVFLITINLLGLLPYTFTPTTQLSLNMGFAVPLWLATVIIGMKNQPTIALGHLLPEGTPIPLIPALIIIETISLFIRPLALGVRLTANLTAGHLLIQLIATAVFVLLPMMPAVAILTASVLFLLTLLEVAVAMIQAYVFILLLSLYLQENI.

The next 6 membrane-spanning stretches (helical) occupy residues 13–33 (YLLG…LFPA), 69–89 (WALL…LGLL), 98–118 (QLSL…IIGM), 132–152 (EGTP…SLFI), 179–199 (VFVL…VLFL), and 202–222 (LLEV…LSLY).

The protein belongs to the ATPase A chain family. As to quaternary structure, component of the ATP synthase complex composed at least of ATP5F1A/subunit alpha, ATP5F1B/subunit beta, ATP5MC1/subunit c (homooctomer), MT-ATP6/subunit a, MT-ATP8/subunit 8, ATP5ME/subunit e, ATP5MF/subunit f, ATP5MG/subunit g, ATP5MK/subunit k, ATP5MJ/subunit j, ATP5F1C/subunit gamma, ATP5F1D/subunit delta, ATP5F1E/subunit epsilon, ATP5PF/subunit F6, ATP5PB/subunit b, ATP5PD/subunit d, ATP5PO/subunit OSCP. ATP synthase complex consists of a soluble F(1) head domain (subunits alpha(3) and beta(3)) - the catalytic core - and a membrane F(0) domain - the membrane proton channel (subunits c, a, 8, e, f, g, k and j). These two domains are linked by a central stalk (subunits gamma, delta, and epsilon) rotating inside the F1 region and a stationary peripheral stalk (subunits F6, b, d, and OSCP). Interacts with DNAJC30; interaction is direct.

It is found in the mitochondrion inner membrane. It carries out the reaction H(+)(in) = H(+)(out). Subunit a, of the mitochondrial membrane ATP synthase complex (F(1)F(0) ATP synthase or Complex V) that produces ATP from ADP in the presence of a proton gradient across the membrane which is generated by electron transport complexes of the respiratory chain. ATP synthase complex consist of a soluble F(1) head domain - the catalytic core - and a membrane F(1) domain - the membrane proton channel. These two domains are linked by a central stalk rotating inside the F(1) region and a stationary peripheral stalk. During catalysis, ATP synthesis in the catalytic domain of F(1) is coupled via a rotary mechanism of the central stalk subunits to proton translocation. With the subunit c (ATP5MC1), forms the proton-conducting channel in the F(0) domain, that contains two crucial half-channels (inlet and outlet) that facilitate proton movement from the mitochondrial intermembrane space (IMS) into the matrix. Protons are taken up via the inlet half-channel and released through the outlet half-channel, following a Grotthuss mechanism. The sequence is that of ATP synthase F(0) complex subunit a from Danio rerio (Zebrafish).